The primary structure comprises 81 residues: Small ribosomal subunit protein bS18 (81 aa).

Belongs to the bacterial ribosomal protein bS18 family. In terms of assembly, part of the 30S ribosomal subunit. Forms a tight heterodimer with protein bS6.

Its function is as follows. Binds as a heterodimer with protein bS6 to the central domain of the 16S rRNA, where it helps stabilize the platform of the 30S subunit. In Chlamydia muridarum (strain MoPn / Nigg), this protein is Small ribosomal subunit protein bS18.